We begin with the raw amino-acid sequence, 247 residues long: Small ribosomal subunit protein uS2 (247 aa).

Belongs to the universal ribosomal protein uS2 family.

In Pseudomonas syringae pv. syringae (strain B728a), this protein is Small ribosomal subunit protein uS2.